The sequence spans 355 residues: Ribosomal RNA small subunit methyltransferase H (355 aa).

Residues 55-57 (GGH), aspartate 75, aspartate 122, and glutamine 129 each bind S-adenosyl-L-methionine. The interval 327–355 (ERTSQPLPATGAEDFVPAVPGAAEKGRRR) is disordered.

Belongs to the methyltransferase superfamily. RsmH family.

The protein localises to the cytoplasm. It catalyses the reaction cytidine(1402) in 16S rRNA + S-adenosyl-L-methionine = N(4)-methylcytidine(1402) in 16S rRNA + S-adenosyl-L-homocysteine + H(+). Specifically methylates the N4 position of cytidine in position 1402 (C1402) of 16S rRNA. The protein is Ribosomal RNA small subunit methyltransferase H of Bordetella avium (strain 197N).